Here is a 557-residue protein sequence, read N- to C-terminus: Kelch repeat and BTB domain-containing protein 2 (557 aa).

The BTB domain occupies 26 to 95 (CDVIITIGDG…LYNRHISSMN (70 aa)). The 91-residue stretch at 133-223 (HKLYEMVHIP…CIDIQNLDKK (91 aa)) folds into the BACK domain. Kelch repeat units lie at residues 305 to 352 (EIII…VIDD), 353 to 399 (TIYA…VLDQ), and 401 to 464 (IYII…SHKD).

As to quaternary structure, interacts (via BTB domain) with host CUL3.

The protein resides in the host cytoplasm. Probable substrate-specific adapter of CUL3-containing E3 ubiquitin-protein ligases which mediate the ubiquitination and subsequent proteasomal degradation of host target proteins. The sequence is that of Kelch repeat and BTB domain-containing protein 2 (KBTB2) from Bos taurus (Bovine).